The chain runs to 476 residues: MANLHLLTVEILTAALGLGLLALGLLVPHSDRRGIAYVATAGLAGILAAAFGMREASGVVLGGYVIDPFGTYFKILFLVAAMLTAACSYDYVEKMGLNQGEYYALLVLATLGMMVLASSGELVSLYLGLELMTITFCILAAFHLGDAKSAEAGIKYVLLGAMSSAIFLYGLSLVYGSSGTTVIREIGQAVATRGASPALLLGTIFILAGFAFKVTAVPFHMWSPDVYEGAPTPVTGFLSVASKAAAFAALVRVFFGALPDLHSFWVQLFIALAVLTIVLGNLVAIPQTNIKRLLAYSSIAQAGYLLLGIVSFSVLGVGAVMYYAMLYVFGNMGAFMAATAFYNNDGSDEIKDYAGLARRSPLVAALMLFSLLSLAGIPPMAGFVGKFYLFMSIISRQYIWLAILGILMSMVSVYYYLLVAKAMYLGNPPEGSKPLRVAPGLQVAMVVSLLILFILGIYPTPLTNYAMNSAVTFFMP.

The next 13 membrane-spanning stretches (helical) occupy residues 7–27, 33–53, 59–79, 100–120, 122–142, 156–176, 199–219, 237–257, 265–285, 305–325, 363–383, 399–419, and 437–457; these read LTVE…GLLV, RGIA…AFGM, VVLG…LFLV, GEYY…ASSG, LVSL…LAAF, YVLL…LVYG, LLLG…AVPF, FLSV…FFGA, WVQL…LVAI, LLLG…YYAM, VAAL…MAGF, IWLA…YLLV, and VAPG…ILGI.

It belongs to the complex I subunit 2 family. NDH-1 is composed of 14 different subunits. Subunits NuoA, H, J, K, L, M, N constitute the membrane sector of the complex.

It is found in the cell membrane. The catalysed reaction is a quinone + NADH + 5 H(+)(in) = a quinol + NAD(+) + 4 H(+)(out). Its function is as follows. NDH-1 shuttles electrons from NADH, via FMN and iron-sulfur (Fe-S) centers, to quinones in the respiratory chain. The immediate electron acceptor for the enzyme in this species is believed to be a menaquinone. Couples the redox reaction to proton translocation (for every two electrons transferred, four hydrogen ions are translocated across the cytoplasmic membrane), and thus conserves the redox energy in a proton gradient. This chain is NADH-quinone oxidoreductase subunit N, found in Moorella thermoacetica (strain ATCC 39073 / JCM 9320).